Consider the following 942-residue polypeptide: Homeobox protein 2 (942 aa).

Composition is skewed to low complexity over residues 32 to 87 (ECNE…NINE) and 98 to 130 (SPYSSPSSSISSPSRSPSPNSPASSSPIHSPIP). 4 disordered regions span residues 32–149 (ECNE…PQNI), 161–494 (LESP…RLKK), 537–580 (RQEK…QGGA), and 609–942 (FKNN…CQQN). Residues 131–149 (NTNFKQSGEYQSIPSPQNI) are compositionally biased toward polar residues. Residues 163–261 (SPNSSNSSPS…PSSNLSKSNS (99 aa)) are compositionally biased toward low complexity. Polar residues predominate over residues 269–290 (QAPSNTSSPQLLSPNHNQQRIS). 2 stretches are compositionally biased toward low complexity: residues 299–430 (NNNH…NSSP) and 450–464 (NNNNNNNNNNNSNSS). The segment covering 465 to 481 (FDEYQPQQKVSRSNSPN) has biased composition (polar residues). Positions 485–544 (EKKRRTRLKKEQADILKTFFDNDDYPTKDDKETLANRLGMSYCAVTTWFSNKRQEKKRRG) form a DNA-binding region, homeobox. Composition is skewed to low complexity over residues 609 to 621 (FKNNNMDNNNKNV), 628 to 685 (NNNN…GSSD), 694 to 737 (NNNN…NNNN), 752 to 764 (NNNNNNNNNNNNN), 776 to 864 (SDDT…YLNN), and 890 to 927 (NNFNGDNNNNNNNKNNNNNNQNNNGNGNNNNNNNNDNN). The stretch at 835 to 865 (NNNNNNNNQNNNNNNNNNQYNNNNKNYLNNI) forms a coiled coil.

The protein localises to the nucleus. Functionally, putative transcription factor that may potentiate the function of warA. This is Homeobox protein 2 (hbx2) from Dictyostelium discoideum (Social amoeba).